The primary structure comprises 914 residues: Inter-alpha-trypsin inhibitor heavy chain H1 (914 aa).

The first 30 residues, 1–30 (MDGAAVGLRVLLGLGLVSLLTLEAMPAAWG), serve as a signal peptide directing secretion. Residues 31-36 (LATTGR) constitute a propeptide that is removed on maturation. Residues 39-168 (AREKRQAVDT…KATFQLTYEE (130 aa)) form the VIT domain. S-linked (Hex...) cysteine glycosylation occurs at C62. A Phosphoserine modification is found at S131. N-linked (GlcNAc...) asparagine glycans are attached at residues N288 and N291. In terms of domain architecture, VWFA spans 293–453 (SKNLVFVIDI…FNFLEVMSME (161 aa)). Phosphothreonine is present on residues T405 and T410. N-linked (GlcNAc...) asparagine glycosylation is present at N591. O-linked (GalNAc...) threonine glycosylation is present at T656. The residue at position 675 (D675) is an Aspartate 1-(chondroitin 4-sulfate)-ester. A propeptide spanning residues 676–914 (PHFIIYVPQK…HTDYIVPDIF (239 aa)) is cleaved from the precursor.

The protein belongs to the ITIH family. In terms of assembly, I-alpha-I plasma protease inhibitors are assembled from one or two heavy chains (HC) and one light chain, bikunin. Inter-alpha-inhibitor (I-alpha-I) is composed of ITIH1/HC1, ITIH2/HC2 and bikunin. Interacts with TNFAIP6 (via Link and CUB domains). In terms of processing, heavy chains are linked to bikunin via chondroitin 4-sulfate esterified to the alpha-carboxyl of the C-terminal aspartate after propeptide cleavage. The S-linked glycan is composed of two 6-carbon sugars, possibly Glc or Gal.

The protein localises to the secreted. Its function is as follows. May act as a carrier of hyaluronan in serum or as a binding protein between hyaluronan and other matrix protein, including those on cell surfaces in tissues to regulate the localization, synthesis and degradation of hyaluronan which are essential to cells undergoing biological processes. The protein is Inter-alpha-trypsin inhibitor heavy chain H1 (ITIH1) of Mesocricetus auratus (Golden hamster).